The following is a 483-amino-acid chain: MGDVIVLYASPGMGHIVAMVELGKFIVHRYGPHKFSITILYTCGSIVDTASIPVYIRRISHSHPFISFRQFPRVTNNITRNISVPAITFDFIRQNDPHVRSALQEISKSATVRAFIIDLFCTSALPIGKEFNIPTYYFHTSGAAVLAAFLYLPKIDEQTKTTESFKDLRDTVFEFPGWKSPLKATHMVQLVLDRNDPAYSDMIYFCSHLPKSNGIIVNTFEELEPPSVLQAIAGGLCVPDGPTPPVYYVGPLIEEEKELSKDADAAEKEDCLSWLDKQPSRSVLFLCFGSMGSFPAAQLKEIANGLEASGQRFLWVVKKPPVEEKSKQVHGVDDFDLKGVLPEGFLERTADRGMVVKSWAPQVVVLKKESVGGFVTHCGWNSVLEAVVAGVPMIAWPLYAEQHMNRNVLVTDMEIAIGVEQRDEEGGFVSGEEVERRVRELMESEGGRALRERCKKLGEMASAALGETGSSTRNLVNFVSSIT.

Catalysis depends on His15, which acts as the Proton acceptor. An an anthocyanidin-binding site is contributed by His15. Asp118 (charge relay) is an active-site residue. UDP-alpha-D-glucose is bound by residues Thr140, Ala360, Gln362, His377, Trp380, Asn381, Ser382, and Glu385. An an anthocyanidin-binding site is contributed by Ala400. UDP-alpha-D-glucose contacts are provided by Glu401 and Gln402.

This sequence belongs to the UDP-glycosyltransferase family.

The enzyme catalyses phloretin + UDP-alpha-D-glucose = phlorizin + UDP + H(+). Glycosyltransferase that possesses phloretin 2'-O-glycosyltransferase activity. Converts phloretin to phlorizin (phloretin 2'-O-glucoside), a potent antioxidant. Is specific for phloretin and does not possess glycosyltransferase activity toward naringenin, naringenin chalcone, eriodictyol, eriodictyol chalcone, apigenin, luteolin, kaempferol, quercetin, isoliquiritigenin, butein, caffeic acid, 2-coumaric acid, 3-coumaric acid, 3-hydroxybenzoic acid, 3,4-dihydroxybenzoic acid and 3,4-dihydroxyhydrocinnamic acid. Can glycosylate phloretin in the presence of UDP-glucose, UDP-xylose and UDP-galactose. The polypeptide is Phloretin 2'-O-glucosyltransferase (Pyrus communis (Pear)).